Here is a 529-residue protein sequence, read N- to C-terminus: Beta-hexosaminidase subunit alpha (529 aa).

An N-terminal signal peptide occupies residues 1-22 (MTSSRLWFSLLLAAAFAGRATA). Positions 23 to 88 (LWPWPQNFQT…PRPYLTGKRH (66 aa)) are excised as a propeptide. A disulfide bond links cysteine 58 and cysteine 104. N-linked (GlcNAc...) asparagine glycosylation is found at asparagine 115, asparagine 157, and asparagine 295. Residues cysteine 277 and cysteine 328 are joined by a disulfide bond. The Proton donor role is filled by glutamate 323. Residues 423 to 424 (NR) are critical for hydrolysis GM2 gangliosides. A disulfide bridge connects residues cysteine 505 and cysteine 522.

Belongs to the glycosyl hydrolase 20 family. In terms of assembly, there are 3 beta-hexosaminidase isozymes: isozyme A (hexosaminidase A) is a heterodimer composed of one subunit alpha and one subunit beta (chain A and B); isozyme B (hexosaminidase B) is a homodimer of two beta subunits (two chains A and B); isozyme S (hexosaminidase S) is a homodimer of two alpha subunits. The composition of the dimer (isozyme A versus isozyme S) has a significant effect on the substrate specificity of the alpha subunit active site. N-linked glycan at Asn-115 consists of Man(3)-GlcNAc(2). N-linked glycan at Asn-157 consists of either GlcNAc or GlcNAc(2)-Man(7-9). N-linked glycan at Asn-295 consists of either GlcNAc, GlcNAc-Fuc, or GlcNAc(2)-Man(4).

It is found in the lysosome. The catalysed reaction is Hydrolysis of terminal non-reducing N-acetyl-D-hexosamine residues in N-acetyl-beta-D-hexosaminides.. It catalyses the reaction N-acetyl-beta-D-galactosaminyl-(1-&gt;4)-beta-D-3-sulfogalactosyl-(1-&gt;4)-beta-D-glucosyl-(1&lt;-&gt;1')-ceramide + H2O = a beta-D-3-sulfogalactosyl-(1-&gt;4)-beta-D-glucosyl-(1&lt;-&gt;1')-ceramide + N-acetyl-beta-D-galactosamine. The enzyme catalyses a ganglioside GM2 (d18:1(4E)) + H2O = a ganglioside GM3 (d18:1(4E)) + N-acetyl-beta-D-galactosamine. It carries out the reaction a ganglioside GM2 + H2O = a ganglioside GM3 + N-acetyl-beta-D-galactosamine. The catalysed reaction is beta-D-GalNAc-(1-&gt;4)-alpha-L-IdoA-(1-&gt;3)-beta-D-GalNAc-4-sulfate-(1-&gt;4)-alpha-L-IdoA-(1-&gt;3)-D-GalNAc-4-sulfate + H2O = alpha-L-IdoA-(1-&gt;3)-beta-D-GalNAc-4-sulfate-(1-&gt;4)-alpha-L-IdoA-(1-&gt;3)-D-GalNAc-4-sulfate + N-acetyl-D-galactosamine. It catalyses the reaction N-acetyl-beta-D-6-sulfogalactosaminyl-(1-&gt;4)-alpha-L-iduronyl-(1-&gt;3)-N-acetyl-D-6-sulfogalactosamine + H2O = alpha-L-iduronyl-(1-&gt;3)-N-acetyl-D-6-sulfogalactosamine + N-acetyl-D-6-sulfogalactosamine. Its activity is regulated as follows. Addition of GM2A stimulates the hydrolysis of sulfated glycosphingolipid SM2 and the ganglioside GM2. Hydrolyzes the non-reducing end N-acetyl-D-hexosamine and/or sulfated N-acetyl-D-hexosamine of glycoconjugates, such as the oligosaccharide moieties from proteins and neutral glycolipids, or from certain mucopolysaccharides. The isozyme S is as active as the isozyme A on the anionic bis-sulfated glycans, the chondroitin-6-sulfate trisaccharide (C6S-3), and the dermatan sulfate pentasaccharide, and the sulfated glycosphingolipid SM2. The isozyme B does not hydrolyze each of these substrates, however hydrolyzes efficiently neutral oligosaccharide. Only the isozyme A is responsible for the degradation of GM2 gangliosides in the presence of GM2A. The polypeptide is Beta-hexosaminidase subunit alpha (Homo sapiens (Human)).